A 393-amino-acid chain; its full sequence is Epoxyqueuosine reductase (393 aa).

Catalysis depends on D154, which acts as the Proton donor. One can recognise a 4Fe-4S ferredoxin-type domain in the interval 196–228 (LPLPVDIPVQEGCHSCVACITSCPTGAIVEPYT). Residues C208, C211, C214, C218, C234, C261, C264, and C268 each contribute to the [4Fe-4S] cluster site.

This sequence belongs to the QueG family. In terms of assembly, monomer. The cofactor is cob(II)alamin. [4Fe-4S] cluster is required as a cofactor.

The protein resides in the cytoplasm. The catalysed reaction is epoxyqueuosine(34) in tRNA + AH2 = queuosine(34) in tRNA + A + H2O. It functions in the pathway tRNA modification; tRNA-queuosine biosynthesis. Its function is as follows. Catalyzes the conversion of epoxyqueuosine (oQ) to queuosine (Q), which is a hypermodified base found in the wobble positions of tRNA(Asp), tRNA(Asn), tRNA(His) and tRNA(Tyr). This is Epoxyqueuosine reductase from Shewanella oneidensis (strain ATCC 700550 / JCM 31522 / CIP 106686 / LMG 19005 / NCIMB 14063 / MR-1).